Here is a 1295-residue protein sequence, read N- to C-terminus: Phosphoribosylformylglycinamidine synthase (1295 aa).

The interval 305 to 327 (WPGAATGSGGEIRDEGATGRGAK) is disordered. ATP contacts are provided by residues 307–318 (GAATGSGGEIRD), 386–388 (TGY), and Ala-678. Residues Asp-679, Glu-718, Asn-722, and Asp-884 each contribute to the Mg(2+) site. Ser-886 is an ATP binding site. In terms of domain architecture, Glutamine amidotransferase type-1 spans 1042-1295 (VAVLREQGVN…IFRNARKQLG (254 aa)). Catalysis depends on Cys-1135, which acts as the Nucleophile. Catalysis depends on residues His-1260 and Glu-1262.

It in the N-terminal section; belongs to the FGAMS family. In terms of assembly, monomer.

The protein localises to the cytoplasm. The catalysed reaction is N(2)-formyl-N(1)-(5-phospho-beta-D-ribosyl)glycinamide + L-glutamine + ATP + H2O = 2-formamido-N(1)-(5-O-phospho-beta-D-ribosyl)acetamidine + L-glutamate + ADP + phosphate + H(+). The protein operates within purine metabolism; IMP biosynthesis via de novo pathway; 5-amino-1-(5-phospho-D-ribosyl)imidazole from N(2)-formyl-N(1)-(5-phospho-D-ribosyl)glycinamide: step 1/2. Phosphoribosylformylglycinamidine synthase involved in the purines biosynthetic pathway. Catalyzes the ATP-dependent conversion of formylglycinamide ribonucleotide (FGAR) and glutamine to yield formylglycinamidine ribonucleotide (FGAM) and glutamate. This Salmonella typhi protein is Phosphoribosylformylglycinamidine synthase.